Here is a 332-residue protein sequence, read N- to C-terminus: Ectoine dioxygenase (332 aa).

The segment covering 1–10 has biased composition (polar residues); the sequence is MSVQTSSNRP. A disordered region spans residues 1 to 47; sequence MSVQTSSNRPLPQANLHIATETPEADSRIRSAPRPGQDPYPTRLSEP. Glutamine 163 contacts L-ectoine. Lysine 169 is a binding site for 2-oxoglutarate. Residues histidine 180, aspartate 182, and histidine 281 each coordinate Fe cation.

It belongs to the PhyH family. EctD subfamily. Homodimer. It depends on Fe(2+) as a cofactor.

The catalysed reaction is L-ectoine + 2-oxoglutarate + O2 = 5-hydroxyectoine + succinate + CO2. Involved in the biosynthesis of 5-hydroxyectoine, called compatible solute, which helps organisms to survive extreme osmotic stress by acting as a highly soluble organic osmolyte. Catalyzes the 2-oxoglutarate-dependent selective hydroxylation of L-ectoine to yield (4S,5S)-5-hydroxyectoine. This chain is Ectoine dioxygenase, found in Halomonas elongata (strain ATCC 33173 / DSM 2581 / NBRC 15536 / NCIMB 2198 / 1H9).